A 392-amino-acid polypeptide reads, in one-letter code: S-adenosylmethionine decarboxylase proenzyme (392 aa).

Catalysis depends on residues Glu-43 and Glu-46. Ser-100 acts as the Schiff-base intermediate with substrate; via pyruvic acid in catalysis. Ser-100 carries the post-translational modification Pyruvic acid (Ser); by autocatalysis. The active-site Proton donor; for catalytic activity is the Cys-114. Residues Ser-264 and His-277 each act as proton acceptor; for processing activity in the active site.

It belongs to the eukaryotic AdoMetDC family. It depends on pyruvate as a cofactor. Post-translationally, is synthesized initially as an inactive proenzyme. Formation of the active enzyme involves a self-maturation process in which the active site pyruvoyl group is generated from an internal serine residue via an autocatalytic post-translational modification. Two non-identical subunits are generated from the proenzyme in this reaction, and the pyruvate is formed at the N-terminus of the alpha chain, which is derived from the carboxyl end of the proenzyme. The post-translation cleavage follows an unusual pathway, termed non-hydrolytic serinolysis, in which the side chain hydroxyl group of the serine supplies its oxygen atom to form the C-terminus of the beta chain, while the remainder of the serine residue undergoes an oxidative deamination to produce ammonia and the pyruvoyl group blocking the N-terminus of the alpha chain.

It catalyses the reaction S-adenosyl-L-methionine + H(+) = S-adenosyl 3-(methylsulfanyl)propylamine + CO2. It functions in the pathway amine and polyamine biosynthesis; S-adenosylmethioninamine biosynthesis; S-adenosylmethioninamine from S-adenosyl-L-methionine: step 1/1. The sequence is that of S-adenosylmethionine decarboxylase proenzyme from Leishmania infantum.